Reading from the N-terminus, the 346-residue chain is tRNA N6-adenosine threonylcarbamoyltransferase (346 aa).

Residues H111 and H115 each coordinate Fe cation. Residues L134–G138, D167, G180, and N279 contribute to the substrate site. Fe cation is bound at residue D307.

The protein belongs to the KAE1 / TsaD family. It depends on Fe(2+) as a cofactor.

Its subcellular location is the cytoplasm. The enzyme catalyses L-threonylcarbamoyladenylate + adenosine(37) in tRNA = N(6)-L-threonylcarbamoyladenosine(37) in tRNA + AMP + H(+). Its function is as follows. Required for the formation of a threonylcarbamoyl group on adenosine at position 37 (t(6)A37) in tRNAs that read codons beginning with adenine. Is involved in the transfer of the threonylcarbamoyl moiety of threonylcarbamoyl-AMP (TC-AMP) to the N6 group of A37, together with TsaE and TsaB. TsaD likely plays a direct catalytic role in this reaction. The polypeptide is tRNA N6-adenosine threonylcarbamoyltransferase (Burkholderia ambifaria (strain MC40-6)).